A 154-amino-acid polypeptide reads, in one-letter code: Ribosomal RNA large subunit methyltransferase H (154 aa).

Residues G103 and 122–127 (FSKLTF) contribute to the S-adenosyl-L-methionine site.

Belongs to the RNA methyltransferase RlmH family. Homodimer.

Its subcellular location is the cytoplasm. It carries out the reaction pseudouridine(1915) in 23S rRNA + S-adenosyl-L-methionine = N(3)-methylpseudouridine(1915) in 23S rRNA + S-adenosyl-L-homocysteine + H(+). In terms of biological role, specifically methylates the pseudouridine at position 1915 (m3Psi1915) in 23S rRNA. The chain is Ribosomal RNA large subunit methyltransferase H from Caldicellulosiruptor saccharolyticus (strain ATCC 43494 / DSM 8903 / Tp8T 6331).